Here is a 366-residue protein sequence, read N- to C-terminus: ABI gene family member 3 (366 aa).

Residues 33–61 (CEDNYVQATDKRKALEETMAFTTQALASV) adopt a coiled-coil conformation. Residues 161–195 (SRTGTLSRKSIKAPATPASATLGRPPRIPEPVHLP) are disordered. 2 positions are modified to phosphoserine: serine 213 and serine 216. Positions 215 to 302 (GSAEGVGGAP…PPPGFGPDEP (88 aa)) are disordered. Pro residues predominate over residues 232–248 (PPAPPLPSSLDPPPPPA). An SH3 domain is found at 308-366 (SYLEKVVTLYPYTSQKDNELSFSEGTVICVTRRYSDGWCEGVSSEGTGFFPGNYVEPSC). The residue at position 342 (serine 342) is a Phosphoserine.

The protein belongs to the ABI family. May interact with PAK1 and PAK2. Probably interacts with TARSH. In terms of tissue distribution, expressed in heart, lung, liver, pancreas, kidney, placenta and at low levels in brain and skeletal muscle.

Its subcellular location is the cytoplasm. Functionally, may inhibit tumor metastasis. In vitro, reduces cell motility. In Homo sapiens (Human), this protein is ABI gene family member 3 (ABI3).